We begin with the raw amino-acid sequence, 429 residues long: Adenylosuccinate synthetase (429 aa).

GTP contacts are provided by residues 12–18 (GDEGKGK) and 40–42 (GHT). Residue Asp13 is the Proton acceptor of the active site. Residues Asp13 and Gly40 each coordinate Mg(2+). Residues 13–16 (DEGK), 38–41 (NAGH), Thr129, Arg143, Gln223, Thr238, and Arg302 each bind IMP. His41 acts as the Proton donor in catalysis. 298–304 (TVTGRPR) contacts substrate. GTP contacts are provided by residues Arg304, 330–332 (KLD), and 412–414 (STS).

This sequence belongs to the adenylosuccinate synthetase family. Homodimer. Requires Mg(2+) as cofactor.

It localises to the cytoplasm. The enzyme catalyses IMP + L-aspartate + GTP = N(6)-(1,2-dicarboxyethyl)-AMP + GDP + phosphate + 2 H(+). It participates in purine metabolism; AMP biosynthesis via de novo pathway; AMP from IMP: step 1/2. In terms of biological role, plays an important role in the de novo pathway of purine nucleotide biosynthesis. Catalyzes the first committed step in the biosynthesis of AMP from IMP. The chain is Adenylosuccinate synthetase from Rhodospirillum rubrum (strain ATCC 11170 / ATH 1.1.1 / DSM 467 / LMG 4362 / NCIMB 8255 / S1).